A 572-amino-acid chain; its full sequence is Ribonuclease Y (572 aa).

A helical transmembrane segment spans residues 1–21 (MPTLYVILSLLLGLIGGVLVQ). Disordered regions lie at residues 59–85 (HEAAEQDRQDAISKTQDAARRVQDAAE) and 110–142 (QLEAEREQAKADAAQQREALSTDRQETRRERED). Basic and acidic residues-rich tracts occupy residues 110–119 (QLEAEREQAK) and 129–142 (LSTDRQETRRERED). In terms of domain architecture, KH spans 262-322 (SVSVVPIPSD…LRREVARHVL (61 aa)). Residues 388–481 (VLKHSVQVAH…VAAADAISAA (94 aa)) form the HD domain.

This sequence belongs to the RNase Y family.

The protein localises to the cell membrane. Its function is as follows. Endoribonuclease that initiates mRNA decay. This is Ribonuclease Y from Deinococcus radiodurans (strain ATCC 13939 / DSM 20539 / JCM 16871 / CCUG 27074 / LMG 4051 / NBRC 15346 / NCIMB 9279 / VKM B-1422 / R1).